Here is a 121-residue protein sequence, read N- to C-terminus: HTH-type transcriptional regulator Rv1152 (121 aa).

In terms of domain architecture, HTH gntR-type spans 15–83; that stretch reads KPLFDQLRTQ…GRFGTFISRF (69 aa). The segment at residues 43–62 is a DNA-binding region (H-T-H motif); sequence VRDLAGQLGVAANTVARAYR.

Its subcellular location is the cytoplasm. It is found in the secreted. The protein resides in the cell wall. Its function is as follows. Transcriptional regulator that modulates resistance to vancomycin and aminoglycosides. Negatively regulates the expression of several genes responsive to vancomycin, resulting in decreased susceptibility of bacteria to vancomycin. Negatively regulates the expression of genes encoding the ribosome binding protein Hsp, the small subunit of sulfate adenylyltransferase CysD, the L-lysine-epsilon aminotransferase LAT and the protease HtpX. Also modulates purine metabolism and aminoglycoside antibiotic resistance. Negatively regulates the expression of purine metabolism-related genes and the accumulation of purine metabolites, which affects aminoglycoside antibiotic resistance. This is HTH-type transcriptional regulator Rv1152 from Mycobacterium tuberculosis (strain ATCC 25618 / H37Rv).